We begin with the raw amino-acid sequence, 2148 residues long: Polyketide synthase 1 (2148 aa).

The segment at 19-261 is N-terminal acylcarrier protein transacylase domain (SAT); it reads FIFGDQSSCN…TPLAVHAPYH (243 aa). Residues 394 to 829 enclose the Ketosynthase family 3 (KS3) domain; it reads ESKIAIIGMS…GGNTALLVED (436 aa). Catalysis depends on for beta-ketoacyl synthase activity residues C566, H701, and H745. Residues 929 to 1233 are malonyl-CoA:ACP transacylase (MAT) domain; the sequence is AFVFSGQGSQ…PSLMRNKDGW (305 aa). S1018 functions as the For acyl/malonyl transferase activity in the catalytic mechanism. The product template (PT) domain stretch occupies residues 1310-1624; that stretch reads TASVHRIVHE…RKVLNTAMPP (315 aa). An N-terminal hotdog fold region spans residues 1314 to 1447; that stretch reads HRIVHESVEK…SSLHFEQPKV (134 aa). The PKS/mFAS DH domain maps to 1314-1619; sequence HRIVHESVEK…FQGIPRKVLN (306 aa). The Proton acceptor; for dehydratase activity role is filled by H1346. The segment at 1474–1619 is C-terminal hotdog fold; sequence LNSRMSSGVI…FQGIPRKVLN (146 aa). D1533 serves as the catalytic Proton donor; for dehydratase activity. The disordered stretch occupies residues 1619–1655; the sequence is NTAMPPPKSQNEAPVRSGPAKPAVKPPRSASSEHSGH. Residues 1678–1752 enclose the Carrier 1 domain; it reads RNPMLPVFKI…DLAAHLGMDT (75 aa). Residue S1712 is modified to O-(pantetheine 4'-phosphoryl)serine. Low complexity predominate over residues 1755-1790; it reads ADQSSGQSSSSGGLSPRSDSIGEMTSSATTPPSMSP. The segment at 1755 to 1796 is disordered; that stretch reads ADQSSGQSSSSGGLSPRSDSIGEMTSSATTPPSMSPRGSVSG. The Carrier 2 domain occupies 1793 to 1870; sequence SVSGSQCKDV…SFKHMFQQGH (78 aa). Position 1830 is an O-(pantetheine 4'-phosphoryl)serine (S1830). Residues 1882–2146 form a thioesterase (TE) domain region; sequence LKQYRATSTL…ERVAAFIRSI (265 aa). S1973 acts as the For thioesterase activity in catalysis.

In terms of biological role, polyketide synthase; part of the Pks1 gene cluster that mediates the biosynthesis of an anthraquinone derivative pigment that contributes to conidial pigmentation that provides protection from UV radiation, heat and cold stress. The polyketide synthase Pks1 produces 1-acetyl-2,4,6,8-tetrahydroxy-9,10-anthraquinone though condensation of acetyl-CoA with malonyl-CoA. The dehydratase EthD and the laccase Mlac1 further convert the anthraquinone derivative into the final conidial pigment. This Metarhizium brunneum (strain ARSEF 3297) protein is Polyketide synthase 1.